A 290-amino-acid chain; its full sequence is 4-hydroxybenzoate octaprenyltransferase (290 aa).

Helical transmembrane passes span 23–43, 46–66, 96–116, 118–138, 141–161, 169–189, 212–232, 235–255, and 265–285; these read IGTE…SDGY, LKMF…GCAI, AIWV…FLPI, TFYW…MKRY, LPQV…YTAT, CWLL…QYAI, IPII…ALYI, LLFP…IYQW, and LCFW…LAIL.

The protein belongs to the UbiA prenyltransferase family. The cofactor is Mg(2+).

Its subcellular location is the cell inner membrane. The catalysed reaction is all-trans-octaprenyl diphosphate + 4-hydroxybenzoate = 4-hydroxy-3-(all-trans-octaprenyl)benzoate + diphosphate. Its pathway is cofactor biosynthesis; ubiquinone biosynthesis. In terms of biological role, catalyzes the prenylation of para-hydroxybenzoate (PHB) with an all-trans polyprenyl group. Mediates the second step in the final reaction sequence of ubiquinone-8 (UQ-8) biosynthesis, which is the condensation of the polyisoprenoid side chain with PHB, generating the first membrane-bound Q intermediate 3-octaprenyl-4-hydroxybenzoate. The polypeptide is 4-hydroxybenzoate octaprenyltransferase (Acinetobacter baylyi (strain ATCC 33305 / BD413 / ADP1)).